A 156-amino-acid chain; its full sequence is SsrA-binding protein (156 aa).

It belongs to the SmpB family.

It localises to the cytoplasm. Its function is as follows. Required for rescue of stalled ribosomes mediated by trans-translation. Binds to transfer-messenger RNA (tmRNA), required for stable association of tmRNA with ribosomes. tmRNA and SmpB together mimic tRNA shape, replacing the anticodon stem-loop with SmpB. tmRNA is encoded by the ssrA gene; the 2 termini fold to resemble tRNA(Ala) and it encodes a 'tag peptide', a short internal open reading frame. During trans-translation Ala-aminoacylated tmRNA acts like a tRNA, entering the A-site of stalled ribosomes, displacing the stalled mRNA. The ribosome then switches to translate the ORF on the tmRNA; the nascent peptide is terminated with the 'tag peptide' encoded by the tmRNA and targeted for degradation. The ribosome is freed to recommence translation, which seems to be the essential function of trans-translation. This chain is SsrA-binding protein, found in Paracoccus denitrificans (strain Pd 1222).